Reading from the N-terminus, the 313-residue chain is Antiviral protein I (313 aa).

The first 22 residues, 1 to 22 (MKSMLVVTISIWLILAPTSTWA), serve as a signal peptide directing secretion. 2 disulfides stabilise this stretch: cysteine 56–cysteine 281 and cysteine 107–cysteine 128. The active site involves tyrosine 94. Valine 95 is a substrate binding site. Serine 143 is a binding site for substrate. Tyrosine 145 is a catalytic residue. A substrate-binding site is contributed by serine 197. Active-site residues include glutamate 198 and arginine 201. Substrate is bound at residue arginine 201. A propeptide spanning residues 286–313 (NQNAMFPQLIMSTYYNYMVNLGDLFEGF) is cleaved from the precursor.

This sequence belongs to the ribosome-inactivating protein family. Type 1 RIP subfamily. As to quaternary structure, monomer. As to expression, expressed in spring leaves (at protein level). Expressed in roots (at protein level).

The enzyme catalyses Endohydrolysis of the N-glycosidic bond at one specific adenosine on the 28S rRNA.. In terms of biological role, possesses antiviral potency. Inhibits viral infection of plants (tobacco mosaic virus). Inhibits protein synthesis. Releases both adenine and guanine from Escherichia coli rRNA in vitro. Activity on guanine is 20 times slower than that on adenine. This is Antiviral protein I (PAP1) from Phytolacca americana (American pokeweed).